The following is a 620-amino-acid chain: EF-hand calcium-binding domain-containing protein 7 (620 aa).

A disordered region spans residues 1–24 (MANHSSLPSQKYAASERQEYQKPQ). 2 EF-hand domains span residues 98 to 133 (ATKN…KGEK) and 134 to 169 (MSQE…TCEQ). Positions 176–234 (ERMDSNSKAKRQQFGSYIEKSPERSSSPKSSHGNLKLFDSETSTRKENKSSRPSSARSY) are disordered. Residues 213 to 225 (FDSETSTRKENKS) are compositionally biased toward basic and acidic residues. Residues 394 to 429 (EFKSALSDMFDIIDLDGNGLLSLAEYNFFEMRTSGE) form the EF-hand 3 domain. Asp-407, Asp-409, Asn-411, and Glu-418 together coordinate Ca(2+).

The protein localises to the cell projection. It is found in the cilium membrane. Plays a role in the ciliary Hedgehog (Hh) signaling. This chain is EF-hand calcium-binding domain-containing protein 7 (efcab7), found in Xenopus laevis (African clawed frog).